We begin with the raw amino-acid sequence, 277 residues long: Large ribosomal subunit protein uL2 (277 aa).

Disordered stretches follow at residues 35–58 and 213–277; these read QPLPKRAGRNNQGKLTVRHHGGGH and WKGI…RKRK.

This sequence belongs to the universal ribosomal protein uL2 family. In terms of assembly, part of the 50S ribosomal subunit. Forms a bridge to the 30S subunit in the 70S ribosome.

In terms of biological role, one of the primary rRNA binding proteins. Required for association of the 30S and 50S subunits to form the 70S ribosome, for tRNA binding and peptide bond formation. It has been suggested to have peptidyltransferase activity; this is somewhat controversial. Makes several contacts with the 16S rRNA in the 70S ribosome. This Staphylococcus carnosus (strain TM300) protein is Large ribosomal subunit protein uL2.